Reading from the N-terminus, the 537-residue chain is Ribonuclease III domain-containing protein RNC1, chloroplastic (537 aa).

The transit peptide at 1-51 directs the protein to the chloroplast; it reads MELCSSSPSSSLLRICSSSAPEISFSSSISQFPSKTQSILTKSRFQNLRIC. 2 consecutive RNase III domains span residues 141-283 and 415-515; these read LLEV…LCFG and EHPR…TIYG.

Interacts with RNA. Part of large ribonucleo-protein particles that contain CAF1 and/or CAF2.

The protein resides in the plastid. It localises to the chloroplast. In terms of biological role, binds specific group II introns in chloroplasts and facilitates their splicing. Acts on both subgroup IIA and subgroup IIB introns. The substrates of the subgroup II also require the CRM domain proteins CAF1 or CAF2. Binds both single-stranded and double-stranded RNA non-specifically, but lacks endonuclease activity. Required for plastid ribosome biogenesis. This Arabidopsis thaliana (Mouse-ear cress) protein is Ribonuclease III domain-containing protein RNC1, chloroplastic.